A 210-amino-acid polypeptide reads, in one-letter code: Large ribosomal subunit protein uL4 (210 aa).

Residues 41 to 51 (ANARQGTQSTK) show a composition bias toward polar residues. Disordered stretches follow at residues 41–60 (ANAR…QGSS) and 67–98 (KGTG…DFSK).

This sequence belongs to the universal ribosomal protein uL4 family. As to quaternary structure, part of the 50S ribosomal subunit.

One of the primary rRNA binding proteins, this protein initially binds near the 5'-end of the 23S rRNA. It is important during the early stages of 50S assembly. It makes multiple contacts with different domains of the 23S rRNA in the assembled 50S subunit and ribosome. Its function is as follows. Forms part of the polypeptide exit tunnel. The chain is Large ribosomal subunit protein uL4 from Dehalococcoides mccartyi (strain ATCC BAA-2266 / KCTC 15142 / 195) (Dehalococcoides ethenogenes (strain 195)).